The chain runs to 100 residues: UPF0213 protein YhbQ (100 aa).

The GIY-YIG domain occupies 2-77 (TPWYLYLIRT…KQLTKRQKER (76 aa)).

The protein belongs to the UPF0213 family.

In Salmonella choleraesuis (strain SC-B67), this protein is UPF0213 protein YhbQ.